Here is a 413-residue protein sequence, read N- to C-terminus: Heparan-sulfate 6-O-sulfotransferase 1-A (413 aa).

The Cytoplasmic portion of the chain corresponds to 9-15; it reads MVERSSK. Residues 16-36 traverse the membrane as a helical; Signal-anchor for type II membrane protein segment; sequence FLFIVVGSVLFMLILYQYVAP. Residues 37 to 413 are Lumenal-facing; it reads GMMNFGSPHG…DYMNHIINRW (377 aa). Residue 92-100 participates in 3'-phosphoadenylyl sulfate binding; the sequence is HIQKTGGTT. Substrate-binding positions include 122–123, Arg-139, Trp-144, and His-149; that span reads KK. His-149 (proton acceptor) is an active-site residue. Residues Arg-183 and Ser-191 each contribute to the 3'-phosphoadenylyl sulfate site. 2 residues coordinate substrate: His-195 and Trp-202. N-linked (GlcNAc...) asparagine glycosylation is present at Asn-262. A 3'-phosphoadenylyl sulfate-binding site is contributed by 315 to 317; that stretch reads MQY. Asn-318 carries an N-linked (GlcNAc...) asparagine glycan. 321–322 provides a ligand contact to 3'-phosphoadenylyl sulfate; that stretch reads RA. N-linked (GlcNAc...) asparagine glycosylation occurs at Asn-329. Positions 374 to 401 are disordered; it reads PLFPFRRTSSSDSTFRDDAPESEGSRLP.

It belongs to the sulfotransferase 6 family. As to expression, during somitogenesis, first expressed in polster and presumptive forebrain. During mid-somitogenesis, expressed in eye, hindbrain and anterior spinal cord. During late somitogenesis, strong expression in eye and hindbrain, decreased levels in midbrain and anterior spinal cord. At 24 hours post-fertilization (hpf), expressed in neural retina and lens, brain and anterior spinal cord. At 36 hpf, retinal expression is confined to the ciliary marginal zone and there is strong expression in tectum, rhombomeres and otic vesicle. At 48 hpf, expressed in retinal ganglion cells and in tectum, rhombomeres and pectoral fin. Not detected in the vasculature during embryogenesis.

Its subcellular location is the membrane. It carries out the reaction alpha-D-glucosaminyl-[heparan sulfate](n) + 3'-phosphoadenylyl sulfate = 6-sulfo-alpha-D-glucosaminyl-[heparan sulfate](n) + adenosine 3',5'-bisphosphate + H(+). Functionally, 6-O-sulfation enzyme which catalyzes the transfer of sulfate from 3'-phosphoadenosine 5'-phosphosulfate (PAPS) to position 6 of the N-sulfoglucosamine residue (GlcNS) of heparan sulfate. The polypeptide is Heparan-sulfate 6-O-sulfotransferase 1-A (Danio rerio (Zebrafish)).